Reading from the N-terminus, the 455-residue chain is 5'-nucleotidase domain-containing protein 1 (455 aa).

Asp16 acts as the Nucleophile in catalysis. Mg(2+) is bound by residues Asp16 and Asp18. The active-site Proton donor is Asp18. Lys171 bears the N6-acetyllysine mark. Asp313 lines the Mg(2+) pocket. Over residues 339–364 the composition is skewed to basic and acidic residues; that stretch reads GDEGTRSQRPEESEPLEKKGKYEGPK. The segment at 339–368 is disordered; the sequence is GDEGTRSQRPEESEPLEKKGKYEGPKAKPL.

It belongs to the 5'(3')-deoxyribonucleotidase family.

This is 5'-nucleotidase domain-containing protein 1 (NT5DC1) from Homo sapiens (Human).